The following is a 404-amino-acid chain: Tryptophan synthase beta chain (404 aa).

An N6-(pyridoxal phosphate)lysine modification is found at Lys98.

It belongs to the TrpB family. In terms of assembly, tetramer of two alpha and two beta chains. It depends on pyridoxal 5'-phosphate as a cofactor.

The enzyme catalyses (1S,2R)-1-C-(indol-3-yl)glycerol 3-phosphate + L-serine = D-glyceraldehyde 3-phosphate + L-tryptophan + H2O. It participates in amino-acid biosynthesis; L-tryptophan biosynthesis; L-tryptophan from chorismate: step 5/5. Its function is as follows. The beta subunit is responsible for the synthesis of L-tryptophan from indole and L-serine. This Acidiphilium cryptum (strain JF-5) protein is Tryptophan synthase beta chain.